The following is a 278-amino-acid chain: Thioredoxin-related transmembrane protein 1 (278 aa).

Residues 1 to 26 form the signal peptide; it reads MAPSGSLRIPVAVLLLLLWGAPWAHG. Positions 27-132 constitute a Thioredoxin domain; sequence KRSDVRIITD…FINFISDKEW (106 aa). Residues 27 to 180 are Extracellular-facing; the sequence is KRSDVRIITD…EDLGLPIWGS (154 aa). Residues Cys56 and Cys59 each act as nucleophile in the active site. Cys56 and Cys59 form a disulfide bridge. A helical transmembrane segment spans residues 181–203; sequence YTVFALATLLSGLLLGLFMIFVA. Topologically, residues 204–278 are cytoplasmic; it reads DCLCPSKRRR…VGPSLATDKS (75 aa). 2 S-palmitoyl cysteine lipidation sites follow: Cys205 and Cys207. Positions 213-278 are disordered; the sequence is RPQPYPSRKL…VGPSLATDKS (66 aa). Residues Ser226, Ser245, Ser268, Ser272, and Ser278 each carry the phosphoserine modification. The span at 235 to 250 shows a compositional bias: acidic residues; the sequence is EEQEADVEDVSEEESE.

In terms of assembly, interacts with ATP2A2. In terms of processing, palmitoylated; palmitoylation is required for localization to mitochondria-associated endoplasmic reticulum membrane (MAM).

Its subcellular location is the endoplasmic reticulum membrane. It localises to the mitochondrion membrane. The protein localises to the secreted. The catalysed reaction is Catalyzes the rearrangement of -S-S- bonds in proteins.. Functionally, thiredoxin domain-containing protein that participates in various redox reactions through the reversible oxidation of its active center dithiol to a disulfide and catalyze dithiol-disulfide exchange reactions. Acts as a key inhibitor of the alternative triglyceride biosynthesis pathway by inhibiting the activity of TMEM68/DIESL at the endoplasmic reticulum, thereby restricting accumulation of triacylglycerol. The alternative triglyceride biosynthesis pathway mediates formation of triacylglycerol from diacylglycerol and membrane phospholipids. Acts as a protein disulfide isomerase by catalyzing formation or reduction of disulfide bonds. Specifically mediates formation of disulfide bonds of transmembrane proteins at the endoplasmic reticulum membrane. Involved in endoplasmic reticulum-associated degradation (ERAD) via its protein disulfide isomerase activity by acting on folding-defective polypeptides at the endoplasmic reticulum membrane. Acts as a negative regulator of platelet aggregation following secretion in the extracellular space. Acts as a regulator of endoplasmic reticulum-mitochondria contact sites via its ability to regulate redox signals. Regulates endoplasmic reticulum-mitochondria Ca(2+) flux. In Bos taurus (Bovine), this protein is Thioredoxin-related transmembrane protein 1 (TMX1).